A 314-amino-acid chain; its full sequence is 2,3-dihydroxyphenylpropionate/2,3-dihydroxicinnamic acid 1,2-dioxygenase 2 (314 aa).

The Proton donor role is filled by His115. Residue His179 is the Proton acceptor of the active site.

This sequence belongs to the LigB/MhpB extradiol dioxygenase family. As to quaternary structure, homotetramer. It depends on Fe(2+) as a cofactor.

The catalysed reaction is 3-(2,3-dihydroxyphenyl)propanoate + O2 = (2Z,4E)-2-hydroxy-6-oxonona-2,4-dienedioate + H(+). It carries out the reaction (2E)-3-(2,3-dihydroxyphenyl)prop-2-enoate + O2 = (2Z,4E,7E)-2-hydroxy-6-oxonona-2,4,7-trienedioate + H(+). Its pathway is aromatic compound metabolism; 3-phenylpropanoate degradation. Catalyzes the non-heme iron(II)-dependent oxidative cleavage of 2,3-dihydroxyphenylpropionic acid and 2,3-dihydroxicinnamic acid into 2-hydroxy-6-ketononadienedioate and 2-hydroxy-6-ketononatrienedioate, respectively. This is 2,3-dihydroxyphenylpropionate/2,3-dihydroxicinnamic acid 1,2-dioxygenase 2 (mhpB2) from Pseudomonas putida (Arthrobacter siderocapsulatus).